The primary structure comprises 236 residues: Biosynthetic peptidoglycan transglycosylase (236 aa).

A helical membrane pass occupies residues 12–31 (ALLWFVAGSIVLVLVFRWVP).

The protein belongs to the glycosyltransferase 51 family.

It is found in the cell inner membrane. It carries out the reaction [GlcNAc-(1-&gt;4)-Mur2Ac(oyl-L-Ala-gamma-D-Glu-L-Lys-D-Ala-D-Ala)](n)-di-trans,octa-cis-undecaprenyl diphosphate + beta-D-GlcNAc-(1-&gt;4)-Mur2Ac(oyl-L-Ala-gamma-D-Glu-L-Lys-D-Ala-D-Ala)-di-trans,octa-cis-undecaprenyl diphosphate = [GlcNAc-(1-&gt;4)-Mur2Ac(oyl-L-Ala-gamma-D-Glu-L-Lys-D-Ala-D-Ala)](n+1)-di-trans,octa-cis-undecaprenyl diphosphate + di-trans,octa-cis-undecaprenyl diphosphate + H(+). It functions in the pathway cell wall biogenesis; peptidoglycan biosynthesis. Its function is as follows. Peptidoglycan polymerase that catalyzes glycan chain elongation from lipid-linked precursors. The protein is Biosynthetic peptidoglycan transglycosylase of Pseudomonas putida (strain ATCC 47054 / DSM 6125 / CFBP 8728 / NCIMB 11950 / KT2440).